Consider the following 340-residue polypeptide: Aldose 1-epimerase (340 aa).

R77 serves as a coordination point for substrate. The active-site Proton donor is the H172. Position 243 (D243) interacts with substrate. The Proton acceptor role is filled by E305.

Belongs to the aldose epimerase family.

The protein localises to the cytoplasm. The catalysed reaction is alpha-D-glucose = beta-D-glucose. Its pathway is carbohydrate metabolism; hexose metabolism. Its function is as follows. Mutarotase converts alpha-aldose to the beta-anomer. It is active on D-glucose, L-arabinose, D-xylose, D-galactose, maltose and lactose. This is Aldose 1-epimerase (galM) from Haemophilus influenzae (strain ATCC 51907 / DSM 11121 / KW20 / Rd).